The primary structure comprises 396 residues: Maltose/maltodextrin-binding periplasmic protein (396 aa).

The first 26 residues, 1-26 (MKIKTGARILALSALTTMMFSASALA), serve as a signal peptide directing secretion.

It belongs to the bacterial solute-binding protein 1 family. As to quaternary structure, the complex is composed of two ATP-binding proteins (MalK), two transmembrane proteins (MalG and MalF) and a solute-binding protein (MalE).

It localises to the periplasm. Part of the ABC transporter complex MalEFGK involved in maltose/maltodextrin import. Binds maltose and higher maltodextrins. This Klebsiella aerogenes (Enterobacter aerogenes) protein is Maltose/maltodextrin-binding periplasmic protein (malE).